The sequence spans 232 residues: LRRN4 C-terminal-like protein (232 aa).

Residues 1–22 (MPHSPCLLWLLAVTSLVPGTQP) form the signal peptide. Residues 23–189 (LVAGDLEGDE…RLTVPPRPLT (167 aa)) lie on the Extracellular side of the membrane. The 96-residue stretch at 77 to 172 (PPHPPRLGEV…GAEGLDSADG (96 aa)) folds into the Fibronectin type-III domain. A glycan (N-linked (GlcNAc...) asparagine) is linked at N127. The helical transmembrane segment at 190–210 (LLHAAMGVGSALALLSCSALV) threads the bilayer. Residues 211–232 (WHFCLRQRWGCPRRGRPSHAGL) lie on the Cytoplasmic side of the membrane.

The protein resides in the membrane. The polypeptide is LRRN4 C-terminal-like protein (LRRN4CL) (Bos taurus (Bovine)).